The sequence spans 467 residues: ATP synthase subunit beta (467 aa).

ATP is bound at residue 150 to 157 (GGAGVGKT).

Belongs to the ATPase alpha/beta chains family. As to quaternary structure, F-type ATPases have 2 components, CF(1) - the catalytic core - and CF(0) - the membrane proton channel. CF(1) has five subunits: alpha(3), beta(3), gamma(1), delta(1), epsilon(1). CF(0) has three main subunits: a(1), b(2) and c(9-12). The alpha and beta chains form an alternating ring which encloses part of the gamma chain. CF(1) is attached to CF(0) by a central stalk formed by the gamma and epsilon chains, while a peripheral stalk is formed by the delta and b chains.

The protein localises to the cell inner membrane. It catalyses the reaction ATP + H2O + 4 H(+)(in) = ADP + phosphate + 5 H(+)(out). Produces ATP from ADP in the presence of a proton gradient across the membrane. The catalytic sites are hosted primarily by the beta subunits. The polypeptide is ATP synthase subunit beta (Vibrio cholerae serotype O1 (strain ATCC 39541 / Classical Ogawa 395 / O395)).